The primary structure comprises 451 residues: Probable DNA polymerase delta small subunit (451 aa).

The protein belongs to the DNA polymerase delta/II small subunit family. As to quaternary structure, heterodimer with subunits of 125 kDa and 50 kDa.

Its subcellular location is the nucleus. The catalysed reaction is DNA(n) + a 2'-deoxyribonucleoside 5'-triphosphate = DNA(n+1) + diphosphate. The function of the small subunit is not yet clear. This Caenorhabditis elegans protein is Probable DNA polymerase delta small subunit.